Here is a 798-residue protein sequence, read N- to C-terminus: Palmitoyl thioesterase CPT1C (798 aa).

Over 1 to 52 the chain is Cytoplasmic; that stretch reads MAEAHQASSLLSSLSSDGAEVELSSPVWQEIYLCALRSWKRHLWRVWNDFLA. Residues 53 to 75 traverse the membrane as a helical segment; the sequence is GVVPATPLSWLFLFSTIQLACLL. Residues 76–103 are Lumenal-facing; that stretch reads QLDPSLGLMEKIKELLPDWGGQHHQLQG. The helical transmembrane segment at 104–126 threads the bilayer; the sequence is FLSAAVFASCLWGALIFTLHVAL. Residues 127-798 are Cytoplasmic-facing; it reads RLLLSHHGWL…PNTPTSSTNL (672 aa). His-469 functions as the Proton acceptor in the catalytic mechanism. 551–563 provides a ligand contact to CoA; the sequence is GKSFIKCCHVSSD. (R)-carnitine-binding residues include Tyr-585, Ser-587, and Thr-598. The required for interaction with GRIA1 stretch occupies residues 759–798; sequence LFRVGQHFKRQFRGENSDYRYNFLSCKTVDPNTPTSSTNL.

It belongs to the carnitine/choline acetyltransferase family. Peripherally associated with AMPAR complex. AMPAR complex consists of an inner core made of 4 pore-forming GluA/GRIA proteins (GRIA1, GRIA2, GRIA3 and GRIA4) and 4 major auxiliary subunits arranged in a twofold symmetry. One of the two pairs of distinct binding sites is occupied either by CNIH2, CNIH3 or CACNG2, CACNG3. The other harbors CACNG2, CACNG3, CACNG4, CACNG8 or GSG1L. This inner core of AMPAR complex is complemented by outer core constituents binding directly to the GluA/GRIA proteins at sites distinct from the interaction sites of the inner core constituents. Outer core constituents include at least PRRT1, PRRT2, CKAMP44/SHISA9, FRRS1L and NRN1. The proteins of the inner and outer core serve as a platform for other, more peripherally associated AMPAR constituents, including CPT1C. Alone or in combination, these auxiliary subunits control the gating and pharmacology of the AMPAR complex and profoundly impact their biogenesis and protein processing. Interacts with SACM1L; the interaction regulates SACM1L phosphatidylinositol-3-phosphatase activity and translocation to endoplasmic reticulum/trans Golgi network in a malonyl-CoA dependent manner. Interacts with ATL1. As to expression, predominantly expressed in brain (at protein level) and testis, highly expressed in the hippocampus, amygdala and cerebellum. Expressed in neurons but not astrocytes. Expressed in the ventral horn from spinal cords.

It localises to the synapse. It is found in the cell projection. The protein localises to the axon. The protein resides in the dendrite. Its subcellular location is the dendritic spine. It localises to the endoplasmic reticulum membrane. It carries out the reaction S-hexadecanoyl-L-cysteinyl-[protein] + H2O = L-cysteinyl-[protein] + hexadecanoate + H(+). Functionally, palmitoyl thioesterase specifically expressed in the endoplasmic reticulum of neurons. Modulates the trafficking of the glutamate receptor, AMPAR, to plasma membrane through depalmitoylation of GRIA1. Also regulates AMPR trafficking through the regulation of SACM1L phosphatidylinositol-3-phosphatase activity by interaction in a malonyl-CoA dependent manner. Binds malonyl-CoA and couples malonyl-CoA to ceramide levels, necessary for proper spine maturation and contributing to systemic energy homeostasis and appetite control. Binds to palmitoyl-CoA, but does not have carnitine palmitoyltransferase 1 catalytic activity or at very low levels. This is Palmitoyl thioesterase CPT1C (Cpt1c) from Mus musculus (Mouse).